The chain runs to 46 residues: Large ribosomal subunit protein bL34 (46 aa).

This sequence belongs to the bacterial ribosomal protein bL34 family.

The protein is Large ribosomal subunit protein bL34 (rpmH) of Mycobacterium avium.